We begin with the raw amino-acid sequence, 482 residues long: Glutamyl-tRNA(Gln) amidotransferase subunit A (482 aa).

Residues lysine 75 and serine 150 each act as charge relay system in the active site. Serine 174 acts as the Acyl-ester intermediate in catalysis.

The protein belongs to the amidase family. GatA subfamily. In terms of assembly, heterotrimer of A, B and C subunits.

It carries out the reaction L-glutamyl-tRNA(Gln) + L-glutamine + ATP + H2O = L-glutaminyl-tRNA(Gln) + L-glutamate + ADP + phosphate + H(+). Allows the formation of correctly charged Gln-tRNA(Gln) through the transamidation of misacylated Glu-tRNA(Gln) in organisms which lack glutaminyl-tRNA synthetase. The reaction takes place in the presence of glutamine and ATP through an activated gamma-phospho-Glu-tRNA(Gln). The sequence is that of Glutamyl-tRNA(Gln) amidotransferase subunit A from Thermosynechococcus vestitus (strain NIES-2133 / IAM M-273 / BP-1).